A 555-amino-acid polypeptide reads, in one-letter code: Glucose-6-phosphate isomerase (555 aa).

The active-site Proton donor is Glu356. Catalysis depends on residues His387 and Lys515.

The protein belongs to the GPI family.

It is found in the cytoplasm. The enzyme catalyses alpha-D-glucose 6-phosphate = beta-D-fructose 6-phosphate. The protein operates within carbohydrate biosynthesis; gluconeogenesis. Its pathway is carbohydrate degradation; glycolysis; D-glyceraldehyde 3-phosphate and glycerone phosphate from D-glucose: step 2/4. Catalyzes the reversible isomerization of glucose-6-phosphate to fructose-6-phosphate. This is Glucose-6-phosphate isomerase from Desulforapulum autotrophicum (strain ATCC 43914 / DSM 3382 / VKM B-1955 / HRM2) (Desulfobacterium autotrophicum).